The sequence spans 56 residues: Calsequestrin-1 (56 aa).

Y9 carries the phosphotyrosine modification. A Phosphoserine modification is found at S47.

It belongs to the calsequestrin family. As to quaternary structure, monomer; increases in response to a depletion of intracellular calcium. Homodimer. Homotetramer and homopolymer. Can form linear homooligomers. Ca(2+) ions promote oligomerization. Interacts (via C-terminal end and preferentially with the monomeric form) with STIM1; this interaction increases in response to a depletion of intracellular calcium, decreases both STIM1 aggregation and clustering, interaction of STIM1 with ORAI1 and store-operated Ca(2+) entry (SOCE) activity. Interacts with ASPH and TRDN. Post-translationally, N-glycosylated.

It localises to the endoplasmic reticulum. The protein resides in the sarcoplasmic reticulum. It is found in the sarcoplasmic reticulum lumen. Its subcellular location is the sarcoplasmic reticulum membrane. The protein localises to the mitochondrion matrix. Functionally, calsequestrin is a high-capacity, moderate affinity, calcium-binding protein and thus acts as an internal calcium store in muscle. Calcium ions are bound by clusters of acidic residues at the protein surface, often at the interface between subunits. Can bind around 80 Ca(2+) ions. Regulates the release of lumenal Ca(2+) via the calcium release channel RYR1; this plays an important role in triggering muscle contraction. Negatively regulates store-operated Ca(2+) entry (SOCE) activity. This Canis lupus familiaris (Dog) protein is Calsequestrin-1 (CASQ1).